The following is a 205-amino-acid chain: Small ribosomal subunit protein uS5 (205 aa).

One can recognise an S5 DRBM domain in the interval 49–112 (LVDEVLDINM…VSAKINLVKV (64 aa)).

It belongs to the universal ribosomal protein uS5 family. Part of the 30S ribosomal subunit. Contacts protein S4.

In terms of biological role, with S4 and S12 plays an important role in translational accuracy. The chain is Small ribosomal subunit protein uS5 from Methanospirillum hungatei JF-1 (strain ATCC 27890 / DSM 864 / NBRC 100397 / JF-1).